Reading from the N-terminus, the 429-residue chain is Ribosomal RNA small subunit methyltransferase B (429 aa).

Residues 254-260 (CAAPGGK), Asp-277, Asp-303, and Asp-322 contribute to the S-adenosyl-L-methionine site. Cys-375 functions as the Nucleophile in the catalytic mechanism.

Belongs to the class I-like SAM-binding methyltransferase superfamily. RsmB/NOP family.

The protein localises to the cytoplasm. The catalysed reaction is cytidine(967) in 16S rRNA + S-adenosyl-L-methionine = 5-methylcytidine(967) in 16S rRNA + S-adenosyl-L-homocysteine + H(+). Functionally, specifically methylates the cytosine at position 967 (m5C967) of 16S rRNA. This is Ribosomal RNA small subunit methyltransferase B from Escherichia fergusonii (strain ATCC 35469 / DSM 13698 / CCUG 18766 / IAM 14443 / JCM 21226 / LMG 7866 / NBRC 102419 / NCTC 12128 / CDC 0568-73).